Here is a 73-residue protein sequence, read N- to C-terminus: Large ribosomal subunit protein bL31 (73 aa).

The span at 34–43 (KMNLDIDPKS) shows a compositional bias: basic and acidic residues. A disordered region spans residues 34 to 54 (KMNLDIDPKSHPAWTGGTQQM).

Belongs to the bacterial ribosomal protein bL31 family. Type A subfamily. In terms of assembly, part of the 50S ribosomal subunit.

Binds the 23S rRNA. This chain is Large ribosomal subunit protein bL31, found in Rhodopseudomonas palustris (strain BisA53).